A 112-amino-acid polypeptide reads, in one-letter code: Integration host factor subunit alpha (112 aa).

This sequence belongs to the bacterial histone-like protein family. In terms of assembly, heterodimer of an alpha and a beta chain.

This protein is one of the two subunits of integration host factor, a specific DNA-binding protein that functions in genetic recombination as well as in transcriptional and translational control. This Allorhizobium ampelinum (strain ATCC BAA-846 / DSM 112012 / S4) (Agrobacterium vitis (strain S4)) protein is Integration host factor subunit alpha.